The primary structure comprises 383 residues: MKNITLLGATGSIGKSTLSVVDLHPDKFNIFALSANTNWKQMIKLCNKYQPSYAIMVDEQSAEKLSNAITTDIQVLSSVQALDKIVTHQDTDYVMAAIVGAIGMSSALCGAKAGKRIMLANKESLVLAGDIFMKTVKEFNAELIPVDSEHSAIFQCLKSGKSGLNKIQLTASGGPFLHTPISQFKSITPDEACAHPNWSMGRKISVDSATMMNKGLEVIEAHYLFSLTPKQIDVVIHPQSIVHSSVFYKDGSTLSQLGNPDMRTVIAYAMSYPKRMNSGVSELDLTSTASLEFYQPDFEKFTCLKLAFEALNKGGNAMITMNAANEIAVKYFLNHQISFLDIPKIIDQTLSTMKHTTLNSLEEVINNDLIAREIAHEIIKQYG.

Thr10, Gly11, Ser12, Ile13, Asn38, and Asn121 together coordinate NADPH. Position 122 (Lys122) interacts with 1-deoxy-D-xylulose 5-phosphate. Residue Glu123 coordinates NADPH. Asp147 is a binding site for Mn(2+). Ser148, Glu149, Ser172, and His195 together coordinate 1-deoxy-D-xylulose 5-phosphate. Glu149 contributes to the Mn(2+) binding site. Gly201 contributes to the NADPH binding site. Positions 208, 213, 214, and 217 each coordinate 1-deoxy-D-xylulose 5-phosphate. Glu217 contacts Mn(2+).

This sequence belongs to the DXR family. Mg(2+) is required as a cofactor. Requires Mn(2+) as cofactor.

The catalysed reaction is 2-C-methyl-D-erythritol 4-phosphate + NADP(+) = 1-deoxy-D-xylulose 5-phosphate + NADPH + H(+). It participates in isoprenoid biosynthesis; isopentenyl diphosphate biosynthesis via DXP pathway; isopentenyl diphosphate from 1-deoxy-D-xylulose 5-phosphate: step 1/6. Catalyzes the NADPH-dependent rearrangement and reduction of 1-deoxy-D-xylulose-5-phosphate (DXP) to 2-C-methyl-D-erythritol 4-phosphate (MEP). The polypeptide is 1-deoxy-D-xylulose 5-phosphate reductoisomerase (Vesicomyosocius okutanii subsp. Calyptogena okutanii (strain HA)).